Here is a 158-residue protein sequence, read N- to C-terminus: Phosphopantetheine adenylyltransferase (158 aa).

Position 10 (Thr10) interacts with substrate. ATP is bound by residues 10-11 (TF) and His18. Residues Lys42, Leu74, and Arg88 each coordinate substrate. Residues 89–91 (GIR), Glu99, and 124–130 (WRYLSST) each bind ATP.

It belongs to the bacterial CoaD family. As to quaternary structure, homohexamer. The cofactor is Mg(2+).

It localises to the cytoplasm. The catalysed reaction is (R)-4'-phosphopantetheine + ATP + H(+) = 3'-dephospho-CoA + diphosphate. The protein operates within cofactor biosynthesis; coenzyme A biosynthesis; CoA from (R)-pantothenate: step 4/5. Its function is as follows. Reversibly transfers an adenylyl group from ATP to 4'-phosphopantetheine, yielding dephospho-CoA (dPCoA) and pyrophosphate. This is Phosphopantetheine adenylyltransferase from Actinobacillus pleuropneumoniae serotype 5b (strain L20).